The chain runs to 468 residues: Glycine--tRNA ligase (468 aa).

The substrate site is built by Arg-101 and Glu-170. Residues Arg-202–Glu-204, Phe-212–Phe-217, Glu-289–Leu-290, and Gly-333–Arg-336 each bind ATP. Phe-217–Glu-221 contributes to the substrate binding site. Substrate is bound at residue Glu-329–Gly-333.

Belongs to the class-II aminoacyl-tRNA synthetase family. Homodimer.

It is found in the cytoplasm. The catalysed reaction is tRNA(Gly) + glycine + ATP = glycyl-tRNA(Gly) + AMP + diphosphate. In terms of biological role, catalyzes the attachment of glycine to tRNA(Gly). The polypeptide is Glycine--tRNA ligase (Mycolicibacterium vanbaalenii (strain DSM 7251 / JCM 13017 / BCRC 16820 / KCTC 9966 / NRRL B-24157 / PYR-1) (Mycobacterium vanbaalenii)).